The following is a 286-amino-acid chain: Pantothenate synthetase (286 aa).

30–37 contacts ATP; the sequence is MGNLHDGH. The active-site Proton donor is the His-37. Residue Gln-61 participates in (R)-pantoate binding. A beta-alanine-binding site is contributed by Gln-61. 149-152 contacts ATP; sequence GEKD. (R)-pantoate is bound at residue Gln-155. Residues Val-178 and 186 to 189 contribute to the ATP site; that span reads LSSR.

It belongs to the pantothenate synthetase family. Homodimer.

It localises to the cytoplasm. It catalyses the reaction (R)-pantoate + beta-alanine + ATP = (R)-pantothenate + AMP + diphosphate + H(+). Its pathway is cofactor biosynthesis; (R)-pantothenate biosynthesis; (R)-pantothenate from (R)-pantoate and beta-alanine: step 1/1. Its function is as follows. Catalyzes the condensation of pantoate with beta-alanine in an ATP-dependent reaction via a pantoyl-adenylate intermediate. The protein is Pantothenate synthetase of Edwardsiella ictaluri (strain 93-146).